Consider the following 306-residue polypeptide: uncharacterized protein (306 aa).

Helical transmembrane passes span 6-26 (LLGF…PIAL), 35-55 (AQTI…ALLA), 69-89 (YAWI…LFSS), 98-118 (VAQI…VLIF), 122-142 (LGLH…LFFN), 154-174 (YSTG…YGMA), 186-206 (QILL…ADFS), 211-231 (LTPL…IGYG), 247-267 (VVIT…HYFS), and 281-301 (YIGA…HKLL). EamA domains lie at 17–142 (MAWG…LFFN) and 166–296 (LIWV…LSAI).

The protein belongs to the EamA transporter family.

The protein resides in the cell membrane. This is an uncharacterized protein from Haemophilus influenzae (strain ATCC 51907 / DSM 11121 / KW20 / Rd).